The sequence spans 437 residues: Na(+)/H(+) antiporter NhaA (437 aa).

The next 11 helical transmembrane spans lie at S12–A32, L65–L85, A103–V123, G133–G153, I162–F182, H186–G206, I214–S234, G308–S328, V333–I353, I377–L397, and L412–V432.

It belongs to the NhaA Na(+)/H(+) (TC 2.A.33) antiporter family.

It is found in the cell inner membrane. The catalysed reaction is Na(+)(in) + 2 H(+)(out) = Na(+)(out) + 2 H(+)(in). Na(+)/H(+) antiporter that extrudes sodium in exchange for external protons. This Bacteroides fragilis (strain YCH46) protein is Na(+)/H(+) antiporter NhaA.